A 553-amino-acid chain; its full sequence is Efflux pump mlcE (553 aa).

Over residues 1–19 the composition is skewed to basic and acidic residues; the sequence is MSEPLPPKEGEPRPQKEES. The tract at residues 1–29 is disordered; it reads MSEPLPPKEGEPRPQKEESQNDTLEATES. N-linked (GlcNAc...) asparagine glycosylation occurs at N21. The next 13 membrane-spanning stretches (helical) occupy residues 41-61, 77-96, 101-121, 136-156, 164-184, 196-216, 245-265, 273-293, 319-339, 352-372, 376-396, 440-460, and 516-536; these read LVVA…SIIV, VGWY…PLAG, LLGL…GSVL, AVAG…LSTA, VLIG…PLLG, CFYI…VITI, LVGF…LEWG, SSVI…FVLW, LFMG…PIYF, VYML…GFAI, GYYL…AGLV, ALGI…FLDF, and TFYL…GMGW. The N-linked (GlcNAc...) asparagine glycan is linked to N543.

This sequence belongs to the major facilitator superfamily. TCR/Tet family.

Its subcellular location is the membrane. Its function is as follows. Efflux pump; part of the gene cluster that mediates the biosynthesis of compactin, also known as mevastatin or ML-236B, and which acts as a potent competitive inhibitor of HMG-CoA reductase. The chain is Efflux pump mlcE from Penicillium citrinum.